The primary structure comprises 356 residues: Protein HEXIM1 (356 aa).

Basic and acidic residues-rich tracts occupy residues 1-11 (MAEPLLSEHQH) and 24-47 (VHEEQNSERPPSAEERVPKEDSRW). A disordered region spans residues 1-160 (MAEPLLSEHQ…RRRPSKKKRH (160 aa)). Positions 48 to 58 (QSRASLQSGSR) are enriched in polar residues. Residues 84–93 (CLEKGEKGQN) are compositionally biased toward basic and acidic residues. Phosphoserine is present on residues Ser98 and Ser103. Over residues 145–160 (LGKKKHRRRPSKKKRH) the composition is skewed to basic residues. Residues 147–174 (KKKHRRRPSKKKRHWKPYYKLTWEEKKK) form a basic region; mediates nuclear localization and interaction with 7SK snRNA and NR3C1 region. Residues 199-202 (PYNT) are interaction with P-TEFb. An autoinhibitory acidic region; in absence of 7SK snRNA interacts with the basic region preventing interaction with P-TEFb and modulating subcellular localization region spans residues 207-247 (MDDHDQEEPDLKTGLYPKRAAAKSDDTSDEDFVEEAGEEDG). The segment at 209-259 (DHDQEEPDLKTGLYPKRAAAKSDDTSDEDFVEEAGEEDGGSDGMGGDGSEF) is disordered. Residue Ser230 is modified to Phosphoserine. At Thr233 the chain carries Phosphothreonine. The segment covering 233–248 (TSDEDFVEEAGEEDGG) has biased composition (acidic residues). A phosphoserine mark is found at Ser234, Ser249, and Ser257. Residues 280–346 (SKQELIKEYL…LTENELHRQQ (67 aa)) adopt a coiled-coil conformation. A mediates interaction with CCNT1 region spans residues 283 to 311 (ELIKEYLELEKCLSRKEDENNRLRLESKR). A required for inhibition of ESR1-dependent transcription region spans residues 307–352 (LESKRLGGVDARVRELELELDRLRAENRQLLTENELHRQQERAPPS). The tract at residues 337 to 356 (LTENELHRQQERAPPSKFGD) is disordered.

It belongs to the HEXIM family. Homooligomer and heterooligomer with HEXIM2; probably dimeric. Core component of the 7SK RNP complex, at least composed of 7SK RNA, LARP7, MEPCE, HEXIM1 (or HEXIM2) and P-TEFb (composed of CDK9 and CCNT1/cyclin-T1). Interacts with the N-CoR complex through NCOR1. Interacts with ESR1 and NR3C1. May interact with NF-kappa-B through RELA. Interacts with CCNT2; mediates formation of a tripartite complex with KPNA2. Part of the HDP-RNP complex composed of at least HEXIM1, PRKDC, XRCC5, XRCC6, paraspeckle proteins (SFPQ, NONO, PSPC1, RBM14, and MATR3) and NEAT1 non-coding RNA.

It localises to the nucleus. It is found in the cytoplasm. In terms of biological role, transcriptional regulator which functions as a general RNA polymerase II transcription inhibitor. Core component of the 7SK RNP complex: in cooperation with 7SK snRNA sequesters P-TEFb in a large inactive 7SK snRNP complex preventing RNA polymerase II phosphorylation and subsequent transcriptional elongation. May also regulate NF-kappa-B, ESR1, NR3C1 and CIITA-dependent transcriptional activity. Plays a role in the regulation of DNA virus-mediated innate immune response by assembling into the HDP-RNP complex, a complex that serves as a platform for IRF3 phosphorylation and subsequent innate immune response activation through the cGAS-STING pathway. This Rattus norvegicus (Rat) protein is Protein HEXIM1 (Hexim1).